The following is a 239-amino-acid chain: Ribonuclease HII (239 aa).

One can recognise an RNase H type-2 domain in the interval 30–221; that stretch reads GPVAGVDEVG…VRRLVTAGTP (192 aa). Positions 36, 37, and 130 each coordinate a divalent metal cation.

This sequence belongs to the RNase HII family. The cofactor is Mn(2+). Requires Mg(2+) as cofactor.

The protein resides in the cytoplasm. The catalysed reaction is Endonucleolytic cleavage to 5'-phosphomonoester.. Its function is as follows. Endonuclease that specifically degrades the RNA of RNA-DNA hybrids. The sequence is that of Ribonuclease HII from Mycobacterium sp. (strain JLS).